The sequence spans 146 residues: Hemoglobin subunit beta (146 aa).

At Val-1 the chain carries N-acetylvaline. The 145-residue stretch at His-2–His-146 folds into the Globin domain. Thr-12 bears the Phosphothreonine mark. Lys-59 is subject to N6-acetyllysine. Heme b is bound at residue His-63. The residue at position 82 (Lys-82) is an N6-acetyllysine. His-92 provides a ligand contact to heme b. Cys-93 carries the S-nitrosocysteine modification. An N6-acetyllysine modification is found at Lys-144.

Belongs to the globin family. As to quaternary structure, heterotetramer of two alpha chains and two beta chains. Red blood cells.

Its function is as follows. Involved in oxygen transport from the lung to the various peripheral tissues. In Osphranter rufus (Red kangaroo), this protein is Hemoglobin subunit beta (HBB).